We begin with the raw amino-acid sequence, 374 residues long: Peptidoglycan recognition protein 4 (374 aa).

A signal peptide spans 1–20 (MLSWLLVFSILVLLAQGVSS). Asn39, Asn93, and Asn146 each carry an N-linked (GlcNAc...) asparagine glycan. N-acetylmuramoyl-L-alanine amidase domains are found at residues 76-212 (RPVD…KACP) and 233-359 (PAKY…LSPG). Cystine bridges form between Cys211/Cys333, Cys227/Cys271, and Cys247/Cys253. A peptidoglycan-binding site is contributed by Tyr275. Interaction with murein stretches follow at residues 294–303 (QGSKTDSYND) and 354–355 (NT).

This sequence belongs to the N-acetylmuramoyl-L-alanine amidase 2 family. Homodimer; disulfide-linked. Heterodimer with PGLYRP3; disulfide-linked. In terms of tissue distribution, ubiquitous.

The protein localises to the secreted. Pattern receptor that binds to murein peptidoglycans (PGN) of Gram-positive bacteria. Has bactericidal activity towards Gram-positive bacteria. May kill Gram-positive bacteria by interfering with peptidoglycan biosynthesis. Also binds to Gram-negative bacteria, and has bacteriostatic activity towards Gram-negative bacteria. Plays a role in innate immunity. This Mus musculus (Mouse) protein is Peptidoglycan recognition protein 4 (Pglyrp4).